A 576-amino-acid chain; its full sequence is Phosphoenolpyruvate-protein phosphotransferase (576 aa).

The active-site Tele-phosphohistidine intermediate is His-189. Phosphoenolpyruvate contacts are provided by Arg-296 and Arg-332. Glu-431 and Asp-455 together coordinate Mg(2+). Phosphoenolpyruvate contacts are provided by residues Asn-454–Asp-455 and Arg-465. The active-site Proton donor is the Cys-502.

This sequence belongs to the PEP-utilizing enzyme family. Homodimer. Mg(2+) serves as cofactor.

The protein resides in the cytoplasm. It carries out the reaction L-histidyl-[protein] + phosphoenolpyruvate = N(pros)-phospho-L-histidyl-[protein] + pyruvate. In terms of biological role, general (non sugar-specific) component of the phosphoenolpyruvate-dependent sugar phosphotransferase system (sugar PTS). This major carbohydrate active-transport system catalyzes the phosphorylation of incoming sugar substrates concomitantly with their translocation across the cell membrane. Enzyme I transfers the phosphoryl group from phosphoenolpyruvate (PEP) to the phosphoryl carrier protein (HPr). The protein is Phosphoenolpyruvate-protein phosphotransferase (ptsI) of Buchnera aphidicola subsp. Baizongia pistaciae (strain Bp).